Here is a 470-residue protein sequence, read N- to C-terminus: MENLQVKALPKEFLLGTATAAYQVEGATRVDGKGINMWDVYLQENSPFLPDPASDFYYRYEEDIALAAEHGLQALRLSISWVRIFPDIDGDANVLAVHYYHRVFQSCLKHNVIPFVSLHHFDSPQKMLETGDWLNRENIDRFIRYARFCFQEFTEVKHWFTINELMSLAAGQYIGGQFPPNHHFQLSEAIQANHNMLLAHALAVLEFHQLGIEGKVGCIHALKPGYPIDGQKENILAAKRYDVYNNKFLLDGTFLGYYSEDTLFHLNQILEANNSSFIIEDGDLEIMKRAAPLNTMFGMNYYRSEFIREYKGENRQEFNSTGIKGQSSFKLNALGEFVKKPGIPTTDWDWNIYPQGLFDMLLRIKEEYPQHPVIYLTENGTALKEVKPEGENDIIDDSKRIRYIEQHLHKVLEARDRGVNIQGYFIWSLQDQFSWANGYNKRYGLFFVDYETQKRYIKKSALWVKGLKRN.

D-galactose 6-phosphate contacts are provided by Q23, H120, N163, E164, and N300. Catalysis depends on E164, which acts as the Proton donor. The Nucleophile role is filled by E378. D-galactose 6-phosphate contacts are provided by S434, W435, K441, and Y443.

It belongs to the glycosyl hydrolase 1 family.

The enzyme catalyses a 6-phospho-beta-D-galactoside + H2O = D-galactose 6-phosphate + an alcohol. The protein operates within carbohydrate metabolism; lactose degradation; D-galactose 6-phosphate and beta-D-glucose from lactose 6-phosphate: step 1/1. In Streptococcus pneumoniae serotype 4 (strain ATCC BAA-334 / TIGR4), this protein is 6-phospho-beta-galactosidase 1.